The sequence spans 588 residues: Methylcrotonoyl-CoA carboxylase beta chain, mitochondrial (588 aa).

The CoA carboxyltransferase N-terminal domain maps to 72-329; the sequence is MNSTLKQLKE…KKQPSPVITE (258 aa). The carboxyltransferase stretch occupies residues 72-570; that stretch reads MNSTLKQLKE…RKVIALSLSA (499 aa). In terms of domain architecture, CoA carboxyltransferase C-terminal spans 329–570; it reads ETEEPLYPTS…RKVIALSLSA (242 aa). The segment at 366-395 is acyl-CoA binding; the sequence is RFDEFKELYGTTLICGFARVHGMPVGIIAN.

The protein belongs to the AccD/PCCB family. Probably a dodecamer composed of six biotin-containing alpha subunits and six beta subunits.

The protein localises to the mitochondrion matrix. It carries out the reaction 3-methylbut-2-enoyl-CoA + hydrogencarbonate + ATP = 3-methyl-(2E)-glutaconyl-CoA + ADP + phosphate + H(+). It participates in amino-acid degradation; L-leucine degradation; (S)-3-hydroxy-3-methylglutaryl-CoA from 3-isovaleryl-CoA: step 2/3. Functionally, carboxyltransferase subunit of the 3-methylcrotonyl-CoA carboxylase, an enzyme that catalyzes the conversion of 3-methylcrotonyl-CoA to 3-methylglutaconyl-CoA, a critical step for leucine and isovaleric acid catabolism. In Dictyostelium discoideum (Social amoeba), this protein is Methylcrotonoyl-CoA carboxylase beta chain, mitochondrial (mccb).